We begin with the raw amino-acid sequence, 265 residues long: MSSSREENVYLAKLAEQAERYEEMVEFMEKVAKTVDTDELTVEERNLLSVAYKNVIGARRASWRIISSIEQKEESRGNDDHVSIIKDYRGKIETELSKICDGILNLLDSHLVPTASLAESKVFYLKMKGDYHRYLAEFKTGAERKEAAESTLVAYKSAQDIALADLAPTHPIRLGLALNFSVFYYEILNSPDRACSLAKQAFDEAISELDTLGEESYKDSTLIMQLLRDNLTLWNSDINDEAGGDEIKEASKHEPEEGKPAETGQ.

Ser-67, Ser-109, and Ser-190 each carry phosphoserine. Thr-211 is subject to Phosphothreonine. Residues 242 to 265 (AGGDEIKEASKHEPEEGKPAETGQ) form a disordered region. The span at 245 to 265 (DEIKEASKHEPEEGKPAETGQ) shows a compositional bias: basic and acidic residues.

This sequence belongs to the 14-3-3 family. As to quaternary structure, component of the SERK1 signaling complex, composed of KAPP, CDC48A, GRF6 or GRF7, SERK1, SERK2, SERK3/BAK1 and BRI1. Interacts with DREB1A and DREB1B in the nucleus. Interacts with CINV1.

The protein resides in the nucleus. Its subcellular location is the cytoplasm. Its function is as follows. Is associated with a DNA binding complex that binds to the G box, a well-characterized cis-acting DNA regulatory element found in plant genes. This Arabidopsis thaliana (Mouse-ear cress) protein is 14-3-3-like protein GF14 nu (GRF7).